A 311-amino-acid chain; its full sequence is ATP synthase subunit a (311 aa).

The next 6 helical transmembrane spans lie at 62–82 (AVHVDTLGWGIFLALLLGFIF), 123–143 (IAPMGLTIFSWVFMMNLMDLI), 170–190 (DPNATLGMAFTVFALMIMFSI), 213–233 (LWYLNILLIPVNTILETVALI), 253–273 (IFILIALLFSVGLVMGFVGGV), and 276–296 (WAWAVFHILVITLQAFIFMVL).

This sequence belongs to the ATPase A chain family. As to quaternary structure, F-type ATPases have 2 components, CF(1) - the catalytic core - and CF(0) - the membrane proton channel. CF(1) has five subunits: alpha(3), beta(3), gamma(1), delta(1), epsilon(1). CF(0) has three main subunits: a(1), b(2) and c(9-12). The alpha and beta chains form an alternating ring which encloses part of the gamma chain. CF(1) is attached to CF(0) by a central stalk formed by the gamma and epsilon chains, while a peripheral stalk is formed by the delta and b chains.

The protein localises to the cell inner membrane. Its function is as follows. Key component of the proton channel; it plays a direct role in the translocation of protons across the membrane. This chain is ATP synthase subunit a, found in Saccharophagus degradans (strain 2-40 / ATCC 43961 / DSM 17024).